Reading from the N-terminus, the 272-residue chain is Indole-3-glycerol phosphate synthase (272 aa).

The protein belongs to the TrpC family.

The catalysed reaction is 1-(2-carboxyphenylamino)-1-deoxy-D-ribulose 5-phosphate + H(+) = (1S,2R)-1-C-(indol-3-yl)glycerol 3-phosphate + CO2 + H2O. Its pathway is amino-acid biosynthesis; L-tryptophan biosynthesis; L-tryptophan from chorismate: step 4/5. The sequence is that of Indole-3-glycerol phosphate synthase from Mycolicibacterium paratuberculosis (strain ATCC BAA-968 / K-10) (Mycobacterium paratuberculosis).